The following is a 426-amino-acid chain: Docking protein 3 (426 aa).

One can recognise a PH domain in the interval 4–115; the sequence is PVKDGIIYVQ…WIEQLCQLAF (112 aa). The IRS-type PTB domain occupies 145-249; it reads DLTEFPVLVL…ACQQQGQESP (105 aa). The tract at residues 243 to 282 is disordered; the sequence is QQGQESPQPSAQGLSNQPWGAEAEDPQCSPTLGRAHSGSH. A compositionally biased stretch (polar residues) spans 247-260; that stretch reads ESPQPSAQGLSNQP. Tyrosine 331 carries the post-translational modification Phosphotyrosine. The interval 357–426 is disordered; that stretch reads GCRQAPEGHS…RDGPGARDWS (70 aa). A compositionally biased stretch (basic residues) spans 402 to 411; it reads KPQRTLRAKL.

This sequence belongs to the DOK family. Type A subfamily. Homooligomer. Interacts with GRB2 and INPP5D/SHIP. Tyrosine-phosphorylated in the presence of GRB2.

The protein resides in the cytoplasm. It localises to the cell membrane. In terms of biological role, DOK proteins are enzymatically inert adaptor or scaffolding proteins. They provide a docking platform for the assembly of multimolecular signaling complexes. Plays a role as negative regulator of the mobilization of calcium ions and of calcium signaling. In Gallus gallus (Chicken), this protein is Docking protein 3 (DOK3).